Reading from the N-terminus, the 447-residue chain is Tubulin beta chain (447 aa).

Positions 11, 69, 138, 142, 143, 144, 204, and 226 each coordinate GTP. A Mg(2+)-binding site is contributed by E69. Positions 425 to 447 are disordered; the sequence is YQEASISEGEEEYDEEAPLEAEE. Residues 432–447 are compositionally biased toward acidic residues; the sequence is EGEEEYDEEAPLEAEE.

The protein belongs to the tubulin family. As to quaternary structure, dimer of alpha and beta chains. A typical microtubule is a hollow water-filled tube with an outer diameter of 25 nm and an inner diameter of 15 nM. Alpha-beta heterodimers associate head-to-tail to form protofilaments running lengthwise along the microtubule wall with the beta-tubulin subunit facing the microtubule plus end conferring a structural polarity. Microtubules usually have 13 protofilaments but different protofilament numbers can be found in some organisms and specialized cells. It depends on Mg(2+) as a cofactor.

It localises to the cytoplasm. The protein resides in the cytoskeleton. In terms of biological role, tubulin is the major constituent of microtubules, a cylinder consisting of laterally associated linear protofilaments composed of alpha- and beta-tubulin heterodimers. Microtubules grow by the addition of GTP-tubulin dimers to the microtubule end, where a stabilizing cap forms. Below the cap, tubulin dimers are in GDP-bound state, owing to GTPase activity of alpha-tubulin. This chain is Tubulin beta chain (tubB), found in Phaeosphaeria nodorum (strain SN15 / ATCC MYA-4574 / FGSC 10173) (Glume blotch fungus).